The following is a 56-amino-acid chain: Large ribosomal subunit protein bL32c (56 aa).

A compositionally biased stretch (basic residues) spans 1 to 20 (MAAPKKRTSKSRKNMRKSTW). Residues 1-28 (MAAPKKRTSKSRKNMRKSTWKRQAATQA) form a disordered region.

Belongs to the bacterial ribosomal protein bL32 family.

It is found in the plastid. The protein localises to the chloroplast. In Mesostigma viride (Green alga), this protein is Large ribosomal subunit protein bL32c (rpl32).